The following is a 7067-amino-acid chain: Replicase polyprotein 1ab (7067 aa).

The 116-residue stretch at 12–127 (THVQLSLPVL…YRNVLLRKNG (116 aa)) folds into the CoV Nsp1 globular domain. The 32-residue stretch at 148-179 (ELGTDPIEDYEQNWNTKHGSGALRELTRELNG) folds into the BetaCoV Nsp1 C-terminal domain. In terms of domain architecture, CoV Nsp2 N-terminal spans 183 to 456 (TRYVDNNFCG…NEDLLEILNR (274 aa)). 12 residues coordinate Zn(2+): cysteine 200, cysteine 231, histidine 234, histidine 236, cysteine 323, cysteine 326, cysteine 341, cysteine 344, cysteine 370, cysteine 373, histidine 382, and cysteine 416. Residues 200 to 236 (CIKDFLARAGKSMCTLSEQLDYIESKRGVYCCREHEH) are C2H2. A C4 region spans residues 323-344 (CNHCDEVSWQTCDFLKATCEQC). The tract at residues 370–416 (CPACQDPEVGPEHSVADYHNHSNIETRLRKGGRTKCFGGCVFSYVGC) is C2HC. The region spanning 458 to 688 (RVNINIVGDF…LGVVNKALEM (231 aa)) is the CoV Nsp2 middle domain. The region spanning 690–818 (LDQVTIAGTK…TNNVFRLKGG (129 aa)) is the CoV Nsp2 C-terminal domain. In terms of domain architecture, Ubiquitin-like 1 spans 822 to 930 (KGVTFGEDTV…MYCSFYPPDE (109 aa)). 3 Macro domains span residues 998–1164 (VNQF…LDYL), 1201–1329 (KIKA…LPSE), and 1337–1464 (VLGT…TSSS). In terms of domain architecture, DPUP spans 1466-1532 (TPEEYFVETT…PLDKLKSLLS (67 aa)). The Ubiquitin-like 2 domain occupies 1536–1591 (VKTIKVFTTVDNTNLHTHIVDMSMTYGQQFGPTYLDGADVTKIKPHVNHEGKTFFV). The region spanning 1605–1869 (YYHTIDESFL…YTEIEPKLDG (265 aa)) is the Peptidase C16 domain. Catalysis depends on cysteine 1645, which acts as the For PL-PRO activity. The Zn(2+) site is built by cysteine 1723, cysteine 1726, cysteine 1758, and cysteine 1760. A C4-type zinc finger spans residues 1723–1760 (CKHCGQKTTTLKGVEAVMYMGTLSYDELKTGVSIPCVC). Residues histidine 1806 and aspartate 1820 each act as for PL-PRO activity in the active site. The Nucleic acid-binding domain occupies 1882-1992 (PIDLVPTQPM…CLWSTKPVDT (111 aa)). Positions 2017–2126 (TTSEEVVENP…LGQTAVITSN (110 aa)) constitute a G2M domain. An HD1 region spans residues 2086–2365 (LALGLKTLAT…IFFASFYYVW (280 aa)). A helical transmembrane segment spans residues 2197–2217 (LFTIVMWLLLLSICLGSLTYV). A 3Ecto domain is found at 2218–2288 (TAVLGVCLSS…QVTISSYKLD (71 aa)). 2 disulfides stabilise this stretch: cysteine 2234-cysteine 2262 and cysteine 2253-cysteine 2259. A run of 2 helical transmembrane segments spans residues 2298-2318 (WLLA…SAIM) and 2345-2365 (MAPV…YYVW). Positions 2366–2456 (KSYVHIMDGC…QFKRPINPTD (91 aa)) are Y1. Residues 2366-2734 (KSYVHIMDGC…ITTKISLKGG (369 aa)) form the CoV Nsp3 Y domain. Zn(2+) contacts are provided by histidine 2370, cysteine 2375, cysteine 2380, cysteine 2383, cysteine 2416, histidine 2419, cysteine 2423, and cysteine 2426. The ZF1 stretch occupies residues 2370-2383 (HIMDGCTSSTCMMC). The tract at residues 2416–2426 (CKAHNWNCLNC) is ZF2. The Y2 stretch occupies residues 2457–2551 (QSAYVVDSVT…LLDQALVSDV (95 aa)). The tract at residues 2457 to 2734 (QSAYVVDSVT…ITTKISLKGG (278 aa)) is coV-Y. Residues 2552 to 2633 (GDSTEVSVKM…ECLKLSHHSD (82 aa)) are Y3. The Y4 stretch occupies residues 2634–2734 (IEVTGDSCNN…ITTKISLKGG (101 aa)). 7 consecutive transmembrane segments (helical) span residues 2744 to 2764 (LLKV…IMPV), 2986 to 3006 (PGVF…TPLV), 3016 to 3036 (ASVV…YYFM), 3048 to 3068 (VVAA…LAPA), 3071 to 3091 (FLPG…TNDV), 3099 to 3119 (WFAM…VFCI), and 3136 to 3156 (VMFN…TFLL). The tract at residues 2749–3156 (LLCVLAALFC…EEAALCTFLL (408 aa)) is HD2. The Nsp4C domain occupies 3136-3234 (VMFNGVTFST…QTSITSAVLQ (99 aa)). Residues 3235 to 3540 (SGFRKMAFPS…VRQCSGVTFQ (306 aa)) enclose the Peptidase C30 domain. Active-site for 3CL-PRO activity residues include histidine 3275 and cysteine 3379. 7 helical membrane-spanning segments follow: residues 3558–3578 (FLTS…FFVY), 3580–3600 (NAFL…MLLV), 3606–3626 (FLCL…MVYM), 3652–3672 (DCVM…RTVY), 3679–3698 (VWTL…GNSL), 3722–3742 (IMFL…LLFI), and 3750–3770 (IMLV…LFCL). The segment at 3558–3770 (FLTSLLILVQ…CCCYFGLFCL (213 aa)) is HD3. A RdRp Nsp7 cofactor domain is found at 3831-3913 (SKMSDVKCTS…EMLDNRATLQ (83 aa)). The RdRp Nsp8 cofactor domain maps to 3914 to 4111 (AIASEFSSLP…LRANSAVKLQ (198 aa)). The region spanning 4112 to 4224 (NNELSPVALR…GSLAATVRLQ (113 aa)) is the Nsp9 ssRNA-binding domain. One can recognise an ExoN/MTase coactivator domain in the interval 4225-4363 (AGNATEVPAN…CDQLREPMMQ (139 aa)). The Zn(2+) site is built by cysteine 4298, cysteine 4301, histidine 4307, cysteine 4314, cysteine 4341, cysteine 4344, cysteine 4352, and cysteine 4354. Zinc fingers lie at residues 4298-4314 (CLYC…KGFC) and 4341-4354 (CTVC…GCSC). The region spanning 4370–4624 (FLNRVCGVSA…AAESHMDADL (255 aa)) is the NiRAN domain. Mn(2+)-binding residues include asparagine 4572 and aspartate 4581. The Nsp12 Interface domain occupies 4629-4727 (VKWDLLKYDF…HNQDVNLHSS (99 aa)). Residues histidine 4658, cysteine 4664, cysteine 4669, cysteine 4673, and cysteine 4850 each coordinate Zn(2+). One can recognise a Nsp12 RNA-dependent RNA polymerase domain in the interval 4728 to 5295 (RLSFKELLVY…AMYTPHTVLQ (568 aa)). Positions 4730–4944 (SFKELLVYAA…HQKLLKSIAA (215 aa)) are rdRp Fingers N-ter. A rdRp Palm N-ter region spans residues 4945 to 4983 (TRGATVVIGTSKFYGGWHNMLKTVYSDVESPHLMGWDYP). Positions 4975-5137 (PHLMGWDYPK…CYNSNYAAQG (163 aa)) constitute a RdRp catalytic domain. Positions 4984–5042 (KCDRAMPNMLRIMASLILARKHSTCCNLSHRFYRLANECAQVLSEMVMCGGSLYVKPGG) are rdRp Fingers C-ter. 3 residues coordinate Zn(2+): histidine 5005, cysteine 5008, and cysteine 5009. The tract at residues 5043 to 5178 (TSSGDATTAY…TRGPHEFCSQ (136 aa)) is rdRp Palm C-ter. Active-site residues include serine 5122, aspartate 5123, and aspartate 5124. The tract at residues 5179–5295 (HTMLVKQGDD…AMYTPHTVLQ (117 aa)) is rdRp Thumb. The region spanning 5296–5408 (AVGACVLCNS…TDFNAIATCD (113 aa)) is the CV ZBD domain. 12 residues coordinate Zn(2+): cysteine 5300, cysteine 5303, cysteine 5311, cysteine 5314, cysteine 5321, cysteine 5324, histidine 5328, histidine 5334, cysteine 5345, cysteine 5350, cysteine 5367, and histidine 5370. A (+)RNA virus helicase ATP-binding domain is found at 5552-5733 (NISNEFSSNV…MKTIGPDMFL (182 aa)). Residue 5577 to 5584 (GPPGTGKS) coordinates ATP. The 170-residue stretch at 5734-5903 (GTCRRCPAEI…TLQAENVTGL (170 aa)) folds into the (+)RNA virus helicase C-terminal domain. One can recognise an ExoN domain in the interval 5968–6183 (MFITREEAIR…RCLAVHECFV (216 aa)). Residues aspartate 5986, glutamate 5988, and glutamate 6087 contribute to the active site. Cysteine 6103, cysteine 6106, cysteine 6122, histidine 6125, histidine 6153, cysteine 6157, and histidine 6160 together coordinate Zn(2+). Active-site residues include histidine 6164 and aspartate 6169. Cysteine 6175 is a binding site for Zn(2+). The N7-MTase domain occupies 6192–6423 (YPIIGDELKI…NLWNTFTKLQ (232 aa)). 6227-6233 (DIGNPKA) is an S-adenosyl-L-methionine binding site. The segment at 6310–6324 (CDGGSLYVNKHAFHT) is gpppA-binding. Zn(2+) contacts are provided by cysteine 6348, cysteine 6369, cysteine 6380, and histidine 6383. Residues 6424-6484 (SLENVAYNVV…NVAFELWAKR (61 aa)) form the Nsp15 N-terminal oligomerization domain. The AV-Nsp11N/CoV-Nsp15M domain occupies 6485–6610 (NIKPVPEIKI…YFKKVDGIIQ (126 aa)). The NendoU domain occupies 6627-6766 (KPRSQMETDF…KDGHVETFYP (140 aa)). Catalysis depends on residues histidine 6657, histidine 6672, lysine 6712, lysine 6815, aspartate 6899, lysine 6939, and glutamate 6972. Residues 6771–7065 (SQAWQPGVAM…RVVVSSDILV (295 aa)) enclose the Nidovirus-type SAM-dependent 2'-O-MTase domain.

This sequence belongs to the coronaviruses polyprotein 1ab family. Interacts with host PHB and PHB2. In terms of assembly, interacts with papain-like protease nsp3 and non-structural protein 6. As to quaternary structure, monomer. Homodimer. Only the homodimer shows catalytic activity. Interacts with nsp8 and nsp12 to form the replication-transcription complex (RTC): nsp12, nsp7, two subunits of nsp8, and up to two subunits of nsp13. In terms of assembly, interacts with nsp7, nsp13 and nsp12 to form the replication-transcription complex (RTC): nsp12, nsp7, two subunits of nsp8, and up to two subunits of nsp13. As to quaternary structure, interacts with nsp12. Interacts with proofreading exoribonuclease nsp14 and 2'-O-methyltransferase nsp16; these interactions enhance nsp14 and nsp16 enzymatic activities. In terms of assembly, interacts with nsp7 and nsp8 to form the replication-transcription complex (RTC): nsp12, nsp7, two subunits of nsp8, and up to two subunits of nsp13. Interacts with nsp9. As to quaternary structure, interacts with nsp8 to form the replication-transcription complex (RTC): nsp12, nsp7, two subunits of nsp8, and up to two subunits of nsp13. The cofactor is Mn(2+). Requires Mg(2+) as cofactor. In terms of processing, specific enzymatic cleavages in vivo by its own proteases yield mature proteins. 3CL-PRO and PL-PRO proteinases are autocatalytically processed.

It is found in the host membrane. The protein resides in the host cytoplasm. It localises to the host perinuclear region. The protein localises to the host endoplasmic reticulum-Golgi intermediate compartment. It catalyses the reaction RNA(n) + a ribonucleoside 5'-triphosphate = RNA(n+1) + diphosphate. It carries out the reaction ATP + H2O = ADP + phosphate + H(+). The enzyme catalyses Thiol-dependent hydrolysis of ester, thioester, amide, peptide and isopeptide bonds formed by the C-terminal Gly of ubiquitin (a 76-residue protein attached to proteins as an intracellular targeting signal).. The catalysed reaction is a 5'-end (N(7)-methyl 5'-triphosphoguanosine)-ribonucleoside in mRNA + S-adenosyl-L-methionine = a 5'-end (N(7)-methyl 5'-triphosphoguanosine)-(2'-O-methyl-ribonucleoside) in mRNA + S-adenosyl-L-homocysteine + H(+). It catalyses the reaction uridylyl-uridylyl-ribonucleotide-RNA = a 3'-end uridylyl-2',3'-cyclophospho-uridine-RNA + a 5'-end dephospho-ribonucleoside-RNA. It carries out the reaction a 5'-end diphospho-ribonucleoside in mRNA + GTP + H(+) = a 5'-end (5'-triphosphoguanosine)-ribonucleoside in mRNA + diphosphate. The enzyme catalyses a 5'-end (5'-triphosphoguanosine)-ribonucleoside in mRNA + S-adenosyl-L-methionine = a 5'-end (N(7)-methyl 5'-triphosphoguanosine)-ribonucleoside in mRNA + S-adenosyl-L-homocysteine. Functionally, the replicase polyprotein of coronaviruses is a multifunctional protein: it contains the activities necessary for the transcription of negative stranded RNA, leader RNA, subgenomic mRNAs and progeny virion RNA as well as proteinases responsible for the cleavage of the polyprotein into functional products. In terms of biological role, inhibits host translation by interacting with the 40S ribosomal subunit. The nsp1-40S ribosome complex further induces an endonucleolytic cleavage near the 5'UTR of host mRNAs, targeting them for degradation. Viral mRNAs are not susceptible to nsp1-mediated endonucleolytic RNA cleavage thanks to the presence of a 5'-end leader sequence and are therefore protected from degradation. By suppressing host gene expression, nsp1 facilitates efficient viral gene expression in infected cells and evasion from host immune response. May play a role in the modulation of host cell survival signaling pathway by interacting with host PHB and PHB2. Indeed, these two proteins play a role in maintaining the functional integrity of the mitochondria and protecting cells from various stresses. Its function is as follows. Responsible for the cleavages located at the N-terminus of the replicase polyprotein. In addition, PL-PRO possesses a deubiquitinating/deISGylating activity and processes both 'Lys-48'- and 'Lys-63'-linked polyubiquitin chains from cellular substrates. Participates together with nsp4 in the assembly of virally-induced cytoplasmic double-membrane vesicles necessary for viral replication. Antagonizes innate immune induction of type I interferon by blocking the phosphorylation, dimerization and subsequent nuclear translocation of host IRF3. Also prevents host NF-kappa-B signaling. Functionally, participates in the assembly of virally-induced cytoplasmic double-membrane vesicles necessary for viral replication. In terms of biological role, cleaves the C-terminus of replicase polyprotein at 11 sites. Recognizes substrates containing the core sequence [ILMVF]-Q-|-[SGACN]. Also able to bind an ADP-ribose-1''-phosphate (ADRP). Plays a role in the initial induction of autophagosomes from host endoplasmic reticulum. Later, limits the expansion of these phagosomes that are no longer able to deliver viral components to lysosomes. Its function is as follows. Forms a hexadecamer with nsp8 (8 subunits of each) that may participate in viral replication by acting as a primase. Alternatively, may synthesize substantially longer products than oligonucleotide primers. Functionally, forms a hexadecamer with nsp7 (8 subunits of each) that may participate in viral replication by acting as a primase. Alternatively, may synthesize substantially longer products than oligonucleotide primers. In terms of biological role, forms a primer, NSP9-pU, which is utilized by the polymerase for the initiation of RNA chains. Interacts with ribosome signal recognition particle RNA (SRP). Together with NSP8, suppress protein integration into the cell membrane, thereby disrupting host immune defenses. Plays a pivotal role in viral transcription by stimulating both nsp14 3'-5' exoribonuclease and nsp16 2'-O-methyltransferase activities. Therefore plays an essential role in viral mRNAs cap methylation. Its function is as follows. RNA-directed RNA polymerase that catalyzes the transcription of viral genomic and subgenomic RNAs. Acts in complex with nsp7 and nsp8 to transcribe both the minus and positive strands of genomic RNA. The kinase-like NiRAN domain of NSP12 attaches one or more nucleotides to the amino terminus of NSP9, forming a covalent RNA-protein intermediate that serves as transcription/replication primer. Subgenomic RNAs (sgRNAs) are formed by discontinuous transcription: The polymerase has the ability to pause at transcription-regulating sequences (TRS) and jump to the leader TRS, resulting in a major deletion. This creates a series of subgenomic RNAs that are replicated, transcribed and translated. In addition, Nsp12 is a subunit of the viral RNA capping enzyme that catalyzes the RNA guanylyltransferase reaction for genomic and sub-genomic RNAs. Subsequently, the NiRAN domain transfers RNA to GDP, and forms the core cap structure GpppA-RNA. Functionally, multi-functional protein with a zinc-binding domain in N-terminus displaying RNA and DNA duplex-unwinding activities with 5' to 3' polarity. Activity of helicase is dependent on magnesium. In terms of biological role, plays a role in viral RNA synthesis through two distinct activities. The N7-guanine methyltransferase activity plays a role in the formation of the cap structure GpppA-RNA. The proofreading exoribonuclease reduces the sensitivity of the virus to RNA mutagens during replication. This activity acts on both ssRNA and dsRNA in a 3'-5' direction. Plays a role in viral transcription/replication and prevents the simultaneous activation of host cell dsRNA sensors, such as MDA5/IFIH1, OAS, and PKR. Acts by degrading the 5'-polyuridines generated during replication of the poly(A) region of viral genomic and subgenomic RNAs. Catalyzes a two-step reaction in which a 2'3'-cyclic phosphate (2'3'-cP) is first generated by 2'-O transesterification, which is then hydrolyzed to a 3'-phosphate (3'-P). If not degraded, poly(U) RNA would hybridize with poly(A) RNA tails and activate host dsRNA sensors. Its function is as follows. Methyltransferase that mediates mRNA cap 2'-O-ribose methylation to the 5'-cap structure of viral mRNAs. N7-methyl guanosine cap is a prerequisite for binding of nsp16. Therefore plays an essential role in viral mRNAs cap methylation which is essential to evade immune system. The chain is Replicase polyprotein 1ab (rep) from Bat coronavirus HKU3 (BtCoV).